Here is a 210-residue protein sequence, read N- to C-terminus: Large ribosomal subunit protein bL25 (210 aa).

Residues isoleucine 175–glutamate 210 are disordered. The span at alanine 201–glutamate 210 shows a compositional bias: basic and acidic residues.

The protein belongs to the bacterial ribosomal protein bL25 family. CTC subfamily. In terms of assembly, part of the 50S ribosomal subunit; part of the 5S rRNA/L5/L18/L25 subcomplex. Contacts the 5S rRNA. Binds to the 5S rRNA independently of L5 and L18.

This is one of the proteins that binds to the 5S RNA in the ribosome where it forms part of the central protuberance. This Geobacillus kaustophilus (strain HTA426) protein is Large ribosomal subunit protein bL25.